We begin with the raw amino-acid sequence, 357 residues long: Vomeronasal type-1 receptor 5 (357 aa).

Topologically, residues 1–3 (MLK) are extracellular. Residues 4-24 (LVIIENMAEIMLFSLDLLLFS) form a helical membrane-spanning segment. Topologically, residues 25 to 52 (TDILCFNFPSKMIKLPGFITIQIFFYPQ) are cytoplasmic. The chain crosses the membrane as a helical span at residues 53–73 (ASFGISANTILFLFHIFTFVF). The Extracellular portion of the chain corresponds to 74–81 (SHRSKSID). Residues 82-102 (MIISHLSLIHILLLFTQAILV) traverse the membrane as a helical segment. Topologically, residues 103–130 (SLDFFGSQNTQDDLRCKVIVFLNKVMRG) are cytoplasmic. Residues 131 to 151 (LSICTPCLLNVLQAIISPSIF) traverse the membrane as a helical segment. At 152–163 (SLAKLKHPSASH) the chain is on the extracellular side. A helical transmembrane segment spans residues 164 to 184 (ILGFFLFSWVLNMFIGVIFCC). The Cytoplasmic portion of the chain corresponds to 185-269 (TLWLPPVKWG…PVSPVKRASQ (85 aa)). The chain crosses the membrane as a helical span at residues 270 to 290 (TILLLVSFVFIYWVDFMFSFS). Residues 291 to 300 (RGVTWINDSL) are Extracellular-facing. Asn297 carries an N-linked (GlcNAc...) asparagine glycan. Residues 301–321 (LVWFQVIVANSYATISPLMLI) form a helical membrane-spanning segment. The Cytoplasmic segment spans residues 322–357 (YADNQIFKTLQMLWFKYLSPPKLMLKFNRQCGSTKK).

Belongs to the G-protein coupled receptor 1 family.

The protein resides in the cell membrane. Putative pheromone receptor. The sequence is that of Vomeronasal type-1 receptor 5 (VN1R5) from Gorilla gorilla gorilla (Western lowland gorilla).